We begin with the raw amino-acid sequence, 730 residues long: Zinc finger protein 615 (730 aa).

The KRAB domain occupies 7 to 78 (LTLEDVAVDF…EDEIYSRICF (72 aa)). C2H2-type zinc fingers lie at residues 203-225 (HVCSECGKAFLKLSQFIDHQRVH), 231-253 (HVCSMCGKAFSRKSRLMDHQRTH), 259-281 (YECTECDKTFLKKSQLNIHQKTH), 287-309 (YTCSECGKAFIKKCRLIYHQRTH), 315-337 (HGCSVCGKAFSTKFSLTTHQKTH), 343-365 (YICSECGKGFIEKRRLIAHHRTH), 371-393 (FICNKCGKGFTLKNSLITHQQTH), 399-421 (YTCSECGKGFSMKHCLMVHQRTH), 427-449 (YKCNECGKGFALKSPLIRHQRTH), 455-477 (YVCTECRKGFTMKSDLIVHQRTH), 483-505 (YICNDCGKGFTVKSRLIVHQRTH), 511-533 (YVCGECGKGFPAKIRLMGHQRTH), 539-561 (YICDECGKGFTEKSHLNVHRRTH), 567-589 (YVCSECGKGLTGKSMLIAHQRTH), 595-617 (YICNECGKGFTMKSTLSIHQQTH), 623-645 (YKCNECDKSFRKKTCLIQHQRFH), 651-673 (FACTECGKFSLRKNDLITHQRIH), 679-701 (YKCSDCGKAFTTKSGLNVHQRKH), and 707-729 (YGCSDCGKAFAHLSILVKHKRIH).

It belongs to the krueppel C2H2-type zinc-finger protein family.

The protein resides in the nucleus. Functionally, may be involved in transcriptional regulation. The chain is Zinc finger protein 615 (ZNF615) from Pongo abelii (Sumatran orangutan).